We begin with the raw amino-acid sequence, 434 residues long: Alpha-enolase (434 aa).

Position 2 is an N-acetylserine (Ser-2). Lys-5 is subject to N6-acetyllysine. Ser-40 is a binding site for Mg(2+). Phosphotyrosine is present on Tyr-44. N6-acetyllysine; alternate is present on Lys-60. Lys-60 carries the post-translational modification N6-succinyllysine; alternate. Lys-64 and Lys-71 each carry N6-acetyllysine. Lys-89 is subject to N6-acetyllysine; alternate. N6-succinyllysine; alternate is present on Lys-89. N6-acetyllysine is present on Lys-126. Substrate-binding residues include His-158 and Glu-167. 2 positions are modified to N6-acetyllysine: Lys-193 and Lys-199. At Lys-202 the chain carries N6-acetyllysine; alternate. Residue Lys-202 forms a Glycyl lysine isopeptide (Lys-Gly) (interchain with G-Cter in SUMO2); alternate linkage. Catalysis depends on Glu-210, which acts as the Proton donor. Residues Lys-228 and Lys-233 each carry the N6-acetyllysine; alternate modification. Lys-228 is modified (N6-succinyllysine; alternate). Lys-228 bears the N6-(2-hydroxyisobutyryl)lysine; alternate mark. Position 233 is an N6-malonyllysine; alternate (Lys-233). Residue Asp-245 coordinates Mg(2+). An N6-acetyllysine modification is found at Lys-256. At Ser-263 the chain carries Phosphoserine. Lys-281 bears the N6-acetyllysine; alternate mark. Lys-281 bears the N6-(2-hydroxyisobutyryl)lysine; alternate mark. Residue Lys-285 is modified to N6-acetyllysine. Tyr-287 carries the phosphotyrosine modification. Phosphoserine is present on Ser-291. Glu-293 and Asp-318 together coordinate Mg(2+). Substrate is bound by residues Glu-293 and Asp-318. N6-acetyllysine is present on residues Lys-335 and Lys-343. Lys-343 acts as the Proton acceptor in catalysis. Substrate is bound by residues 370 to 373 and Lys-394; that span reads SHRS. A required for interaction with PLG region spans residues 405–434; sequence AKYNQILRIEEELGSKAKFAGRSFRNPLAK. At Lys-406 the chain carries N6-acetyllysine. Lys-420 bears the N6-acetyllysine; alternate mark. The residue at position 420 (Lys-420) is an N6-succinyllysine; alternate. Residue Lys-420 is modified to N6-malonyllysine; alternate.

This sequence belongs to the enolase family. As to quaternary structure, mammalian enolase is composed of 3 isozyme subunits, alpha, beta and gamma, which can form homodimers or heterodimers which are cell-type and development-specific. ENO1 interacts with PLG in the neuronal plasma membrane and promotes its activation. The C-terminal lysine is required for this binding. Interacts with ENO4 and PGAM2. Interacts with CMTM6. Mg(2+) is required as a cofactor. ISGylated. Post-translationally, lysine 2-hydroxyisobutyrylation (Khib) by p300/EP300 activates the phosphopyruvate hydratase activity. In terms of tissue distribution, expressed in flagella of epididymal sperm. The alpha/alpha homodimer is expressed in embryo and in most adult tissues. The alpha/beta heterodimer and the beta/beta homodimer are found in striated muscle, and the alpha/gamma heterodimer and the gamma/gamma homodimer in neurons.

The protein resides in the cytoplasm. The protein localises to the cell membrane. It catalyses the reaction (2R)-2-phosphoglycerate = phosphoenolpyruvate + H2O. The protein operates within carbohydrate degradation; glycolysis; pyruvate from D-glyceraldehyde 3-phosphate: step 4/5. Its function is as follows. Glycolytic enzyme that catalyzes the conversion of 2-phosphoglycerate to phosphoenolpyruvate. In addition to glycolysis, involved in various processes such as growth control, hypoxia tolerance and allergic responses. May also function in the intravascular and pericellular fibrinolytic system due to its ability to serve as a receptor and activator of plasminogen on the cell surface of several cell-types such as leukocytes and neurons. Stimulates immunoglobulin production. In Rattus norvegicus (Rat), this protein is Alpha-enolase (Eno1).